The chain runs to 417 residues: Tyrosine--tRNA ligase (417 aa).

Tyr-39 is an L-tyrosine binding site. The 'HIGH' region motif lies at 44-53 (PTAASLHAGG). L-tyrosine-binding residues include Tyr-176 and Gln-180. The short motif at 236 to 240 (KMGKS) is the 'KMSKS' region element. Residue Lys-239 coordinates ATP. The S4 RNA-binding domain maps to 350-417 (LGLLTLLVRA…KKKHLLVRPV (68 aa)).

This sequence belongs to the class-I aminoacyl-tRNA synthetase family. TyrS type 1 subfamily. As to quaternary structure, homodimer.

Its subcellular location is the cytoplasm. The catalysed reaction is tRNA(Tyr) + L-tyrosine + ATP = L-tyrosyl-tRNA(Tyr) + AMP + diphosphate + H(+). Its function is as follows. Catalyzes the attachment of tyrosine to tRNA(Tyr) in a two-step reaction: tyrosine is first activated by ATP to form Tyr-AMP and then transferred to the acceptor end of tRNA(Tyr). This chain is Tyrosine--tRNA ligase, found in Rhizobium meliloti (strain 1021) (Ensifer meliloti).